The chain runs to 203 residues: A-type ATP synthase subunit E (203 aa).

This sequence belongs to the V-ATPase E subunit family. In terms of assembly, has multiple subunits with at least A(3), B(3), C, D, E, F, H, I and proteolipid K(x).

It localises to the cell membrane. Its function is as follows. Component of the A-type ATP synthase that produces ATP from ADP in the presence of a proton gradient across the membrane. This is A-type ATP synthase subunit E from Methanococcus vannielii (strain ATCC 35089 / DSM 1224 / JCM 13029 / OCM 148 / SB).